The chain runs to 965 residues: MENTPSHINKTEPSLDKTYSPQEIEQPLYEHWEKQGYFKPNGDTSKESYCIMIPPPNVTGSLHMGHAFQQTIMDTLIRYQRMQGKNTLWQAGTDHAGIATQMVVERKIAAEEGKTRHDYGRDAFIDKIWEWKGESGGTITRQMRRLGNSVDWERERFTMDEGLSNAVKEVFVRLHKEDLIYRGKRLVNWDPKLRTAISDLEVENRESKGSMWHLRYPLADGAKTAEGKDYLVVATTRPETVLGDTGVAVNPEDPRYKDLIGKEVILPLVGRRIPILGDEHADMEKGTGCVKITPAHDFNDYEVGKRHALPMINILTFDGDIRSEAEVFDTHGEATDAFSNAIPAQFQGLERFAARKAVVAEFEKLGLLEEVKPHDLTVPYGDRGGVVIEPMLTDQWYVRTAPLAKVAIEAVENGEIQFVPKQYENMYYSWMRDIQDWCISRQLWWGHRIPAWYDEQGNVYVGRDEAEVRRDNNLGAEVALRQDEDVLDTWFSSGLWTFSTLGWPEQTDALKTFHPTSVVVSGFDIIFFWIARMIMLTMHFMKDENGKPQVPFKTVYMTGLIRDDEGQKMSKSKGNVIDPLDMVDGISLEALLEKRTGNMMQPQLAEKIRKRTEKQFPNGIEPHGTDALRFTLAALASTGRDINWDMKRLEGYRNFCNKLWNASRFVLMNTEGQDCGQNGGEMVLSLADRWILAEFNQTIKAYREAMDTYRFDLAAGILYEFTWNQFCDWYLELTKPVMNSGSEAELRGTRHTLIQVLEALLRLAHPIIPYITETIWQRVKNLKGITADTIMLQPFPEYDASQVDEQALSDLEWIKQTIIAVRNIRAEMNIAPGKPLEVMLRGANAQAQRRVLENQSFIQSLARLSSLTLLAEGDKGPVSVTKLVEGAEVLIPMAGLIDKATELDRLAKEVAKLDAEIERIEGKLGNEGFVARAPEAVVAKERERLAACAEAKQKLIEQQATIAAL.

The interval 1–22 (MENTPSHINKTEPSLDKTYSPQ) is disordered. The 'HIGH' region motif lies at 56 to 66 (PNVTGSLHMGH). A 'KMSKS' region motif is present at residues 568-572 (KMSKS). Lysine 571 is a binding site for ATP. Residues 896-965 (LIDKATELDR…IEQQATIAAL (70 aa)) adopt a coiled-coil conformation.

It belongs to the class-I aminoacyl-tRNA synthetase family. ValS type 1 subfamily. In terms of assembly, monomer.

It localises to the cytoplasm. The enzyme catalyses tRNA(Val) + L-valine + ATP = L-valyl-tRNA(Val) + AMP + diphosphate. In terms of biological role, catalyzes the attachment of valine to tRNA(Val). As ValRS can inadvertently accommodate and process structurally similar amino acids such as threonine, to avoid such errors, it has a 'posttransfer' editing activity that hydrolyzes mischarged Thr-tRNA(Val) in a tRNA-dependent manner. The protein is Valine--tRNA ligase of Yersinia pseudotuberculosis serotype I (strain IP32953).